We begin with the raw amino-acid sequence, 495 residues long: Guanosine-5'-triphosphate,3'-diphosphate pyrophosphatase (495 aa).

Belongs to the GppA/Ppx family. GppA subfamily.

The enzyme catalyses guanosine 3'-diphosphate 5'-triphosphate + H2O = guanosine 3',5'-bis(diphosphate) + phosphate + H(+). It participates in purine metabolism; ppGpp biosynthesis; ppGpp from GTP: step 2/2. Functionally, catalyzes the conversion of pppGpp to ppGpp. Guanosine pentaphosphate (pppGpp) is a cytoplasmic signaling molecule which together with ppGpp controls the 'stringent response', an adaptive process that allows bacteria to respond to amino acid starvation, resulting in the coordinated regulation of numerous cellular activities. The protein is Guanosine-5'-triphosphate,3'-diphosphate pyrophosphatase of Enterobacter sp. (strain 638).